Here is a 302-residue protein sequence, read N- to C-terminus: 1D-myo-inositol 2-acetamido-2-deoxy-alpha-D-glucopyranoside deacetylase (302 aa).

3 residues coordinate Zn(2+): H12, D15, and H147.

This sequence belongs to the MshB deacetylase family. Zn(2+) is required as a cofactor.

The enzyme catalyses 1D-myo-inositol 2-acetamido-2-deoxy-alpha-D-glucopyranoside + H2O = 1D-myo-inositol 2-amino-2-deoxy-alpha-D-glucopyranoside + acetate. Functionally, catalyzes the deacetylation of 1D-myo-inositol 2-acetamido-2-deoxy-alpha-D-glucopyranoside (GlcNAc-Ins) in the mycothiol biosynthesis pathway. This is 1D-myo-inositol 2-acetamido-2-deoxy-alpha-D-glucopyranoside deacetylase from Thermobispora bispora (strain ATCC 19993 / DSM 43833 / CBS 139.67 / JCM 10125 / KCTC 9307 / NBRC 14880 / R51).